Consider the following 486-residue polypeptide: Betaine aldehyde dehydrogenase (486 aa).

K(+) contacts are provided by threonine 23 and aspartate 90. 147–149 (GAW) serves as a coordination point for NAD(+). Lysine 159 functions as the Charge relay system in the catalytic mechanism. NAD(+) contacts are provided by residues 173-176 (KPSE) and 226-229 (ESGT). Position 241 (leucine 241) interacts with K(+). The active-site Proton acceptor is the glutamate 247. The NAD(+) site is built by glycine 249, cysteine 281, and glutamate 382. Cysteine 281 (nucleophile) is an active-site residue. Cysteine 281 bears the Cysteine sulfenic acid (-SOH) mark. Residues lysine 452 and glycine 455 each coordinate K(+). Glutamate 459 functions as the Charge relay system in the catalytic mechanism.

It belongs to the aldehyde dehydrogenase family. In terms of assembly, dimer of dimers. The cofactor is K(+).

It catalyses the reaction betaine aldehyde + NAD(+) + H2O = glycine betaine + NADH + 2 H(+). The protein operates within amine and polyamine biosynthesis; betaine biosynthesis via choline pathway; betaine from betaine aldehyde: step 1/1. Involved in the biosynthesis of the osmoprotectant glycine betaine. Catalyzes the irreversible oxidation of betaine aldehyde to the corresponding acid. This is Betaine aldehyde dehydrogenase from Vibrio vulnificus (strain CMCP6).